We begin with the raw amino-acid sequence, 373 residues long: Dual-specificity RNA methyltransferase RlmN (373 aa).

Glu94 (proton acceptor) is an active-site residue. The 240-residue stretch at 100 to 339 (EDDRATLCVS…VIVRKTRGDD (240 aa)) folds into the Radical SAM core domain. Cys107 and Cys344 are joined by a disulfide. Residues Cys114, Cys118, and Cys121 each contribute to the [4Fe-4S] cluster site. Residues 168–169 (GE), Ser200, 222–224 (SIH), and Asn301 each bind S-adenosyl-L-methionine. Cys344 serves as the catalytic S-methylcysteine intermediate.

It belongs to the radical SAM superfamily. RlmN family. It depends on [4Fe-4S] cluster as a cofactor.

The protein localises to the cytoplasm. The enzyme catalyses adenosine(2503) in 23S rRNA + 2 reduced [2Fe-2S]-[ferredoxin] + 2 S-adenosyl-L-methionine = 2-methyladenosine(2503) in 23S rRNA + 5'-deoxyadenosine + L-methionine + 2 oxidized [2Fe-2S]-[ferredoxin] + S-adenosyl-L-homocysteine. It carries out the reaction adenosine(37) in tRNA + 2 reduced [2Fe-2S]-[ferredoxin] + 2 S-adenosyl-L-methionine = 2-methyladenosine(37) in tRNA + 5'-deoxyadenosine + L-methionine + 2 oxidized [2Fe-2S]-[ferredoxin] + S-adenosyl-L-homocysteine. Its function is as follows. Specifically methylates position 2 of adenine 2503 in 23S rRNA and position 2 of adenine 37 in tRNAs. m2A2503 modification seems to play a crucial role in the proofreading step occurring at the peptidyl transferase center and thus would serve to optimize ribosomal fidelity. The protein is Dual-specificity RNA methyltransferase RlmN of Shewanella baltica (strain OS185).